The following is a 25-amino-acid chain: Caerin-2.4 (25 aa).

As to expression, expressed by the skin parotoid and/or rostral glands.

Its subcellular location is the secreted. Antibacterial peptide, that adopts an alpha helical conformation which can disrupt bacterial membranes. Each caerin displays a different antimicrobial specificity. This Ranoidea caerulea (Green tree frog) protein is Caerin-2.4.